The primary structure comprises 793 residues: Wall-associated receptor kinase-like 18 (793 aa).

The N-terminal stretch at 1-28 is a signal peptide; it reads MSNESTNCSFFLNLFMLLLLLIFYSADA. Residues 29-378 are Extracellular-facing; it reads CQRECGGISI…YRCVRDKTKA (350 aa). N-linked (GlcNAc...) asparagine glycans are attached at residues asparagine 60, asparagine 130, asparagine 170, asparagine 238, asparagine 285, and asparagine 304. An atypical EGF-like region spans residues 312-371; the sequence is CTCGRITISETSYANCGCTYGYTGNPYVLNGCKDIDECKVKFEYCGKTETCVNFEGGYRC. 3 disulfides stabilise this stretch: cysteine 314–cysteine 327, cysteine 349–cysteine 362, and cysteine 356–cysteine 371. Residues 379 to 399 traverse the membrane as a helical segment; sequence IMIGAGTGFGVLVLVGGLWWL. At 400-793 the chain is on the cytoplasmic side; the sequence is RKFLIKRRIT…VEPLFPRLTW (394 aa). One can recognise a Protein kinase domain in the interval 453 to 728; sequence FSENRVLGHG…REVFTELERI (276 aa). ATP is bound by residues 459–467 and lysine 481; that span reads LGHGGQGTV. The residue at position 526 (tyrosine 526) is a Phosphotyrosine. The Proton acceptor role is filled by aspartate 579. 2 positions are modified to phosphothreonine: threonine 613 and threonine 618. Tyrosine 626 is modified (phosphotyrosine). A disordered region spans residues 733–757; that stretch reads EDSQVHNRIDEEEEEEEEEEEVVTT. Over residues 742-754 the composition is skewed to acidic residues; it reads DEEEEEEEEEEEV.

This sequence belongs to the protein kinase superfamily. Ser/Thr protein kinase family.

It localises to the membrane. The catalysed reaction is L-seryl-[protein] + ATP = O-phospho-L-seryl-[protein] + ADP + H(+). It carries out the reaction L-threonyl-[protein] + ATP = O-phospho-L-threonyl-[protein] + ADP + H(+). Serine/threonine-protein kinase that may function as a signaling receptor of extracellular matrix component. This Arabidopsis thaliana (Mouse-ear cress) protein is Wall-associated receptor kinase-like 18 (WAKL18).